The primary structure comprises 114 residues: Dolichyl-diphosphooligosaccharide--protein glycosyltransferase subunit DAD2 (114 aa).

At 1–30 the chain is on the cytoplasmic side; sequence MPKAAGDAKLLIQSLNKAYAATPTNLKIID. A helical transmembrane segment spans residues 31-51; it reads LYVVFAVATALVQVVYMGIVG. Topologically, residues 52-54 are lumenal; it reads SFP. Residues 55-75 form a helical membrane-spanning segment; the sequence is FNSFLSGVLSSIGTAVLGVCL. Residues 76–93 are Cytoplasmic-facing; it reads RIQVNKDNKEFKDLPPER. A helical membrane pass occupies residues 94–114; the sequence is AFADFVLCNLVLHLVIMNFLG.

It belongs to the DAD/OST2 family. In terms of assembly, component of the oligosaccharyltransferase (OST) complex.

The protein localises to the endoplasmic reticulum membrane. It functions in the pathway protein modification; protein glycosylation. Functionally, subunit of the oligosaccharyl transferase (OST) complex that catalyzes the initial transfer of a defined glycan (Glc(3)Man(9)GlcNAc(2) in eukaryotes) from the lipid carrier dolichol-pyrophosphate to an asparagine residue within an Asn-X-Ser/Thr consensus motif in nascent polypeptide chains, the first step in protein N-glycosylation. N-glycosylation occurs cotranslationally and the complex associates with the Sec61 complex at the channel-forming translocon complex that mediates protein translocation across the endoplasmic reticulum (ER). All subunits are required for a maximal enzyme activity. This is Dolichyl-diphosphooligosaccharide--protein glycosyltransferase subunit DAD2 (DAD2) from Hordeum vulgare (Barley).